Reading from the N-terminus, the 327-residue chain is L-serine dehydratase/L-threonine deaminase (327 aa).

K41 is modified (N6-(pyridoxal phosphate)lysine).

Belongs to the serine/threonine dehydratase family. As to quaternary structure, homodimer. Requires pyridoxal 5'-phosphate as cofactor.

The protein resides in the cytoplasm. It catalyses the reaction L-serine = pyruvate + NH4(+). The enzyme catalyses L-threonine = 2-oxobutanoate + NH4(+). It functions in the pathway carbohydrate biosynthesis; gluconeogenesis. Catalyzes the pyridoxal-phosphate-dependent dehydrative deamination of L-threonine and L-serine to ammonia and alpha-ketobutyrate and pyruvate, respectively. This is L-serine dehydratase/L-threonine deaminase (SDS) from Bos taurus (Bovine).